Here is a 174-residue protein sequence, read N- to C-terminus: Nucleoside-triphosphatase THEP1 (174 aa).

Residues 8-15 (GIPGIGKS) and 99-106 (LIVIDEVG) contribute to the ATP site.

This sequence belongs to the THEP1 NTPase family.

It catalyses the reaction a ribonucleoside 5'-triphosphate + H2O = a ribonucleoside 5'-diphosphate + phosphate + H(+). Its function is as follows. Has nucleotide phosphatase activity towards ATP, GTP, CTP, TTP and UTP. May hydrolyze nucleoside diphosphates with lower efficiency. The sequence is that of Nucleoside-triphosphatase THEP1 from Methanosarcina barkeri (strain Fusaro / DSM 804).